The following is a 363-amino-acid chain: Protein-glutamate methylesterase/protein-glutamine glutaminase of group 3 operon (363 aa).

Residues 7–124 (RVLIVDDSAS…RQALLECSTR (118 aa)) form the Response regulatory domain. D58 bears the 4-aspartylphosphate mark. The 192-residue stretch at 166–357 (PTTERIVCIG…REIMLWYQAG (192 aa)) folds into the CheB-type methylesterase domain. Catalysis depends on residues S177, H203, and D299.

Belongs to the CheB family. In terms of processing, phosphorylated by CheA. Phosphorylation of the N-terminal regulatory domain activates the methylesterase activity.

The protein localises to the cytoplasm. It catalyses the reaction [protein]-L-glutamate 5-O-methyl ester + H2O = L-glutamyl-[protein] + methanol + H(+). The enzyme catalyses L-glutaminyl-[protein] + H2O = L-glutamyl-[protein] + NH4(+). Functionally, involved in chemotaxis. Part of a chemotaxis signal transduction system that modulates chemotaxis in response to various stimuli. Catalyzes the demethylation of specific methylglutamate residues introduced into the chemoreceptors (methyl-accepting chemotaxis proteins or MCP) by CheR. Also mediates the irreversible deamidation of specific glutamine residues to glutamic acid. This chain is Protein-glutamate methylesterase/protein-glutamine glutaminase of group 3 operon, found in Bradyrhizobium diazoefficiens (strain JCM 10833 / BCRC 13528 / IAM 13628 / NBRC 14792 / USDA 110).